Here is a 303-residue protein sequence, read N- to C-terminus: Glycine--tRNA ligase alpha subunit (303 aa).

Belongs to the class-II aminoacyl-tRNA synthetase family. In terms of assembly, tetramer of two alpha and two beta subunits.

Its subcellular location is the cytoplasm. The enzyme catalyses tRNA(Gly) + glycine + ATP = glycyl-tRNA(Gly) + AMP + diphosphate. The polypeptide is Glycine--tRNA ligase alpha subunit (Stenotrophomonas maltophilia (strain K279a)).